The following is a 269-amino-acid chain: Shikimate dehydrogenase (NADP(+)) (269 aa).

Shikimate contacts are provided by residues 14–16 (SKS) and threonine 61. Residue lysine 65 is the Proton acceptor of the active site. Residue glutamate 77 participates in NADP(+) binding. Residues asparagine 86 and aspartate 102 each coordinate shikimate. NADP(+)-binding positions include 126–130 (GAGGA), 149–154 (NRTLSK), and methionine 213. Shikimate is bound at residue tyrosine 215. NADP(+) is bound at residue glycine 238.

This sequence belongs to the shikimate dehydrogenase family. Homodimer.

The enzyme catalyses shikimate + NADP(+) = 3-dehydroshikimate + NADPH + H(+). The protein operates within metabolic intermediate biosynthesis; chorismate biosynthesis; chorismate from D-erythrose 4-phosphate and phosphoenolpyruvate: step 4/7. Its function is as follows. Involved in the biosynthesis of the chorismate, which leads to the biosynthesis of aromatic amino acids. Catalyzes the reversible NADPH linked reduction of 3-dehydroshikimate (DHSA) to yield shikimate (SA). The protein is Shikimate dehydrogenase (NADP(+)) of Pasteurella multocida (strain Pm70).